We begin with the raw amino-acid sequence, 54 residues long: Light-harvesting protein B-880 beta chain (54 aa).

Over 1 to 20 (AEDRSSLSGVSDAEAKEFHA) the chain is Cytoplasmic. 2 residues coordinate a bacteriochlorophyll: H19 and H37. A helical transmembrane segment spans residues 21–43 (LFVSSFTAFIVIAVLAHVLAWAW). Over 44 to 54 (RPWIPGPKGWA) the chain is Periplasmic.

The protein belongs to the antenna complex beta subunit family. The core complex is formed by different alpha and beta chains, binding bacteriochlorophyll molecules, and arranged most probably in tetrameric structures disposed around the reaction center. The non-pigmented gamma chains may constitute additional components.

Its subcellular location is the cell inner membrane. Its function is as follows. Antenna complexes are light-harvesting systems, which transfer the excitation energy to the reaction centers. This chain is Light-harvesting protein B-880 beta chain, found in Rhodoblastus acidophilus (Rhodopseudomonas acidophila).